A 650-amino-acid polypeptide reads, in one-letter code: uncharacterized protein (650 aa).

This sequence belongs to the MG032/MG096/MG288 family.

This is an uncharacterized protein from Mycoplasma genitalium (strain ATCC 33530 / DSM 19775 / NCTC 10195 / G37) (Mycoplasmoides genitalium).